A 468-amino-acid polypeptide reads, in one-letter code: Siroheme synthase (468 aa).

The precorrin-2 dehydrogenase /sirohydrochlorin ferrochelatase stretch occupies residues 1 to 202 (MDYLPLFARL…EQHDSAEQWM (202 aa)). Residues 22–23 (DI) and 43–44 (PS) contribute to the NAD(+) site. Ser126 carries the post-translational modification Phosphoserine. Residues 214–468 (GEIVLVGAGP…SGKEHLINLA (255 aa)) form a uroporphyrinogen-III C-methyltransferase region. S-adenosyl-L-methionine is bound at residue Pro223. Asp246 (proton acceptor) is an active-site residue. Lys268 (proton donor) is an active-site residue. Residues 299–301 (GGD), 329–330 (TA), Met381, and Gly410 each bind S-adenosyl-L-methionine.

This sequence in the N-terminal section; belongs to the precorrin-2 dehydrogenase / sirohydrochlorin ferrochelatase family. The protein in the C-terminal section; belongs to the precorrin methyltransferase family.

It carries out the reaction uroporphyrinogen III + 2 S-adenosyl-L-methionine = precorrin-2 + 2 S-adenosyl-L-homocysteine + H(+). The catalysed reaction is precorrin-2 + NAD(+) = sirohydrochlorin + NADH + 2 H(+). The enzyme catalyses siroheme + 2 H(+) = sirohydrochlorin + Fe(2+). It functions in the pathway cofactor biosynthesis; adenosylcobalamin biosynthesis; precorrin-2 from uroporphyrinogen III: step 1/1. It participates in cofactor biosynthesis; adenosylcobalamin biosynthesis; sirohydrochlorin from precorrin-2: step 1/1. The protein operates within porphyrin-containing compound metabolism; siroheme biosynthesis; precorrin-2 from uroporphyrinogen III: step 1/1. Its pathway is porphyrin-containing compound metabolism; siroheme biosynthesis; siroheme from sirohydrochlorin: step 1/1. It functions in the pathway porphyrin-containing compound metabolism; siroheme biosynthesis; sirohydrochlorin from precorrin-2: step 1/1. Functionally, multifunctional enzyme that catalyzes the SAM-dependent methylations of uroporphyrinogen III at position C-2 and C-7 to form precorrin-2 via precorrin-1. Then it catalyzes the NAD-dependent ring dehydrogenation of precorrin-2 to yield sirohydrochlorin. Finally, it catalyzes the ferrochelation of sirohydrochlorin to yield siroheme. In Tolumonas auensis (strain DSM 9187 / NBRC 110442 / TA 4), this protein is Siroheme synthase.